Here is an 802-residue protein sequence, read N- to C-terminus: MSFNHQEIEKKWQGHWEENKTFRTPDETEKPKFYALDMFPYPSGAGLHVGHPEGYTATDILSRMKRMQGYNVLHPMGWDAFGLPAEQYALDTGNSPAEFTELNINTFRNQIKALGFSYDWDREVNTTDPTYYKWTQWIFLKLFEKGLAYVDEVPVNWCPALGTVLANEEIIDGKSERGGHPVERRPMRQWMLKITAYGDRLLEDLDELNWPESLKDMQRNWIGRSEGAEVHFNIDGTDEKFTVFTTRPDTLFGASYCVLAPEHALVANITIPEQKEAVEAYINSVKMKSDLERTELAKEKTGVFTGAYAVNPVNGEKLPIWIADYVLATYGTGAVMAVPAHDERDYEFASTFNLPMKEVVKGGDISKEAYTGDGAHVNSAFLDGLNKEKAIVKMIEWLEVTSAGNQKVTYRLRDWLFSRQRYWGEPIPVIHWEDGTMTAVKEEELPLVLPKTENIRPSGTGESPLANIEEWVNVVDPETGKKGRRETNTMPQWAGSCWYYLRYIDPNNSEALVDPEKVKQWLPVDIYIGGAEHAVLHLLYARFWHKVLYDIGVVPTKEPFQQLFNQGMILGENNEKMSKSKGNVVNPDDIVASHGADTLRLYEMFMGPLDASIAWSENGLDGARRFLDRVWRLFIQENGELSEKITDAPNKDLEKAYHQTVKKVTEDYAELRFNTAISQMMVFINDAYKAETLPKEYVEGFVKMIAPVAPHIGEELWNKLGYSETITYASWPTFDESKLVEDEVEIVVQIMGKVRTKLTMSKDASKEEMEQLALEAIKEQIEGKTVRKVIVVPGKLVNVVAN.

The 'HIGH' region motif lies at 40-51 (PYPSGAGLHVGH). Positions 576-580 (KMSKS) match the 'KMSKS' region motif. Lysine 579 is a binding site for ATP.

The protein belongs to the class-I aminoacyl-tRNA synthetase family.

It localises to the cytoplasm. The catalysed reaction is tRNA(Leu) + L-leucine + ATP = L-leucyl-tRNA(Leu) + AMP + diphosphate. This chain is Leucine--tRNA ligase, found in Bacillus mycoides (strain KBAB4) (Bacillus weihenstephanensis).